We begin with the raw amino-acid sequence, 967 residues long: Importin-alpha re-exporter (967 aa).

One can recognise an Importin N-terminal domain in the interval 20 to 95; that stretch reads AEEALKVWEL…KREIINLMLK (76 aa).

The protein belongs to the XPO2/CSE1 family. In terms of assembly, binds with high affinity to importin-alpha only in the presence of RanGTP.

The protein localises to the cytoplasm. The protein resides in the nucleus envelope. Its function is as follows. Export receptor for importin alpha. Mediates importin-alpha re-export from the nucleus to the cytoplasm after import substrates have been released into the nucleoplasm. In Schizosaccharomyces pombe (strain 972 / ATCC 24843) (Fission yeast), this protein is Importin-alpha re-exporter (kap109).